The chain runs to 509 residues: Steroid 17-alpha-hydroxylase/17,20 lyase (509 aa).

Cys445 serves as a coordination point for heme.

This sequence belongs to the cytochrome P450 family. It depends on heme as a cofactor.

The protein resides in the membrane. It carries out the reaction a C21-steroid + reduced [NADPH--hemoprotein reductase] + O2 = a 17alpha-hydroxy-C21-steroid + oxidized [NADPH--hemoprotein reductase] + H2O + H(+). The catalysed reaction is 17alpha-hydroxyprogesterone + reduced [NADPH--hemoprotein reductase] + O2 = androst-4-ene-3,17-dione + acetate + oxidized [NADPH--hemoprotein reductase] + H2O + 2 H(+). The enzyme catalyses 17alpha-hydroxypregnenolone + reduced [NADPH--hemoprotein reductase] + O2 = 3beta-hydroxyandrost-5-en-17-one + acetate + oxidized [NADPH--hemoprotein reductase] + H2O + 2 H(+). The protein operates within lipid metabolism; steroid biosynthesis. In terms of biological role, conversion of pregnenolone and progesterone to their 17-alpha-hydroxylated products and subsequently to dehydroepiandrosterone (DHEA) and androstenedione. Catalyzes both the 17-alpha-hydroxylation and the 17,20-lyase reaction. This is Steroid 17-alpha-hydroxylase/17,20 lyase (CYP17A1) from Squalus acanthias (Spiny dogfish).